The primary structure comprises 254 residues: Triosephosphate isomerase (254 aa).

N12–K14 is a binding site for substrate. H99 (electrophile) is an active-site residue. The active-site Proton acceptor is E169. Residues G175, S214, and G235–G236 each bind substrate.

This sequence belongs to the triosephosphate isomerase family. As to quaternary structure, homodimer.

It is found in the cytoplasm. The enzyme catalyses D-glyceraldehyde 3-phosphate = dihydroxyacetone phosphate. Its pathway is carbohydrate biosynthesis; gluconeogenesis. The protein operates within carbohydrate degradation; glycolysis; D-glyceraldehyde 3-phosphate from glycerone phosphate: step 1/1. Its function is as follows. Involved in the gluconeogenesis. Catalyzes stereospecifically the conversion of dihydroxyacetone phosphate (DHAP) to D-glyceraldehyde-3-phosphate (G3P). The chain is Triosephosphate isomerase from Bartonella tribocorum (strain CIP 105476 / IBS 506).